Here is a 60-residue protein sequence, read N- to C-terminus: Large ribosomal subunit protein bL32 (60 aa).

A disordered region spans residues 1–60 (MAVQQNKKTPSKRGMHRSHDFLVAPQLSVEPTTGETHMRHHISPNGFYRGRKVLKTKNDE). The segment covering 49–60 (RGRKVLKTKNDE) has biased composition (basic residues).

It belongs to the bacterial ribosomal protein bL32 family.

The protein is Large ribosomal subunit protein bL32 of Janthinobacterium sp. (strain Marseille) (Minibacterium massiliensis).